Consider the following 688-residue polypeptide: NADH-ubiquinone oxidoreductase 75 kDa subunit (688 aa).

The region spanning 1–85 is the 2Fe-2S ferredoxin-type domain; that stretch reads MLIRFKINEI…DESIETEIDE (85 aa). [2Fe-2S] cluster is bound by residues C38, C49, C52, and C66. The 4Fe-4S His(Cys)3-ligated-type domain occupies 85 to 124; it reads EILKAREGVMEFLLINHPLDCPICDQGGECDLQEQTIAYG. Residues H101, C105, C108, C114, C153, C156, C159, and C204 each contribute to the [4Fe-4S] cluster site. The region spanning 223–279 is the 4Fe-4S Mo/W bis-MGD-type domain; the sequence is LKNIKGIDIFDTVLTPINYQVKGGEIFRILPRINDRLNEEWITDKVRFHYESYKIIE.

Belongs to the complex I 75 kDa subunit family. Complex I is composed of about 45 different subunits. [2Fe-2S] cluster is required as a cofactor. It depends on [4Fe-4S] cluster as a cofactor.

It localises to the mitochondrion inner membrane. It carries out the reaction a ubiquinone + NADH + 5 H(+)(in) = a ubiquinol + NAD(+) + 4 H(+)(out). Functionally, core subunit of the mitochondrial membrane respiratory chain NADH dehydrogenase (Complex I) that is believed to belong to the minimal assembly required for catalysis. Complex I functions in the transfer of electrons from NADH to the respiratory chain. The immediate electron acceptor for the enzyme is believed to be ubiquinone. This is the largest subunit of complex I and it is a component of the iron-sulfur (IP) fragment of the enzyme. It may form part of the active site crevice where NADH is oxidized. The chain is NADH-ubiquinone oxidoreductase 75 kDa subunit (nad11) from Dictyostelium citrinum (Slime mold).